A 167-amino-acid polypeptide reads, in one-letter code: Crossover junction endodeoxyribonuclease RuvC (167 aa).

Catalysis depends on residues aspartate 8, glutamate 67, and aspartate 139. Aspartate 8, glutamate 67, and aspartate 139 together coordinate Mg(2+).

This sequence belongs to the RuvC family. As to quaternary structure, homodimer which binds Holliday junction (HJ) DNA. The HJ becomes 2-fold symmetrical on binding to RuvC with unstacked arms; it has a different conformation from HJ DNA in complex with RuvA. In the full resolvosome a probable DNA-RuvA(4)-RuvB(12)-RuvC(2) complex forms which resolves the HJ. Mg(2+) serves as cofactor.

The protein resides in the cytoplasm. It catalyses the reaction Endonucleolytic cleavage at a junction such as a reciprocal single-stranded crossover between two homologous DNA duplexes (Holliday junction).. In terms of biological role, the RuvA-RuvB-RuvC complex processes Holliday junction (HJ) DNA during genetic recombination and DNA repair. Endonuclease that resolves HJ intermediates. Cleaves cruciform DNA by making single-stranded nicks across the HJ at symmetrical positions within the homologous arms, yielding a 5'-phosphate and a 3'-hydroxyl group; requires a central core of homology in the junction. The consensus cleavage sequence is 5'-(A/T)TT(C/G)-3'. Cleavage occurs on the 3'-side of the TT dinucleotide at the point of strand exchange. HJ branch migration catalyzed by RuvA-RuvB allows RuvC to scan DNA until it finds its consensus sequence, where it cleaves and resolves the cruciform DNA. The protein is Crossover junction endodeoxyribonuclease RuvC of Halorhodospira halophila (strain DSM 244 / SL1) (Ectothiorhodospira halophila (strain DSM 244 / SL1)).